Consider the following 162-residue polypeptide: Large ribosomal subunit protein uL22c (162 aa).

The protein belongs to the universal ribosomal protein uL22 family. Part of the 50S ribosomal subunit.

The protein resides in the plastid. Its subcellular location is the chloroplast. Functionally, this protein binds specifically to 23S rRNA. In terms of biological role, the globular domain of the protein is located near the polypeptide exit tunnel on the outside of the subunit, while an extended beta-hairpin is found that lines the wall of the exit tunnel in the center of the 70S ribosome. The chain is Large ribosomal subunit protein uL22c (rpl22) from Cucumis sativus (Cucumber).